A 304-amino-acid chain; its full sequence is Lipid droplet-associated triacylglycerol lipase (304 aa).

Topologically, residues 1 to 155 (MTVKEYTKSK…MGIKMTAALR (155 aa)) are lumenal. Residue Asn95 is glycosylated (N-linked (GlcNAc...) asparagine). The GXSXG signature appears at 107–111 (GHSVG). The active-site Nucleophile is Ser109. The stretch at 156–176 (YIPPLAHVVSLFSYIFFYWIL) is an intramembrane region. Over 177–304 (SEGFSRFIID…HAEYAINAFF (128 aa)) the chain is Lumenal.

The protein belongs to the AB hydrolase superfamily. LDAH family.

It is found in the lipid droplet. The protein localises to the membrane. It carries out the reaction a triacylglycerol + H2O = a diacylglycerol + a fatty acid + H(+). In terms of biological role, shows both triacylglycerol (TAG) lipase and ester hydrolase activities. May play a role in TAG homeostasis. This chain is Lipid droplet-associated triacylglycerol lipase, found in Saccharomyces cerevisiae (strain ATCC 204508 / S288c) (Baker's yeast).